The sequence spans 545 residues: Membrane protein insertase YidC (545 aa).

A helical transmembrane segment spans residues 8 to 28 (ILLATVLSVGILILWQVIFPK). A disordered region spans residues 31 to 69 (PPKPAPTPAAEVAKPAAPAAPAPGAAAPAVPAPPPDAPE). Low complexity predominate over residues 38–59 (PAAEVAKPAAPAAPAPGAAAPA). 5 helical membrane passes run 325 to 345 (IDYG…LYVM), 355 to 375 (WGVA…PLTY), 421 to 441 (LGGC…YAAL), 458 to 478 (LTAH…SFVM), and 497 to 517 (FFPG…TLYI).

The protein belongs to the OXA1/ALB3/YidC family. Type 1 subfamily. As to quaternary structure, interacts with the Sec translocase complex via SecD. Specifically interacts with transmembrane segments of nascent integral membrane proteins during membrane integration.

It is found in the cell inner membrane. Its function is as follows. Required for the insertion and/or proper folding and/or complex formation of integral membrane proteins into the membrane. Involved in integration of membrane proteins that insert both dependently and independently of the Sec translocase complex, as well as at least some lipoproteins. Aids folding of multispanning membrane proteins. This Anaeromyxobacter dehalogenans (strain 2CP-C) protein is Membrane protein insertase YidC.